The primary structure comprises 353 residues: Dihydroorotate dehydrogenase (quinone) (353 aa).

FMN-binding positions include 67–71 (AGFDK) and Thr-91. Substrate is bound at residue Lys-71. 116–120 (NRMGF) contacts substrate. FMN-binding residues include Asn-144 and Asn-177. Asn-177 serves as a coordination point for substrate. The active-site Nucleophile is the Ser-180. Position 182 (Asn-182) interacts with substrate. FMN-binding residues include Lys-213 and Thr-241. Position 242 to 243 (242 to 243 (NT)) interacts with substrate. FMN-binding positions include Gly-265, Gly-294, and 315 to 316 (YT).

The protein belongs to the dihydroorotate dehydrogenase family. Type 2 subfamily. As to quaternary structure, monomer. The cofactor is FMN.

Its subcellular location is the cell membrane. The enzyme catalyses (S)-dihydroorotate + a quinone = orotate + a quinol. It functions in the pathway pyrimidine metabolism; UMP biosynthesis via de novo pathway; orotate from (S)-dihydroorotate (quinone route): step 1/1. Its function is as follows. Catalyzes the conversion of dihydroorotate to orotate with quinone as electron acceptor. This is Dihydroorotate dehydrogenase (quinone) from Mycobacteroides abscessus (strain ATCC 19977 / DSM 44196 / CCUG 20993 / CIP 104536 / JCM 13569 / NCTC 13031 / TMC 1543 / L948) (Mycobacterium abscessus).